Consider the following 223-residue polypeptide: 3,4-dihydroxy-2-butanone 4-phosphate synthase (223 aa).

Residues 39-40 (RE), Asp44, 152-156 (RRGHT), and Glu176 contribute to the D-ribulose 5-phosphate site. Glu40 is a Mg(2+) binding site. His155 is a Mg(2+) binding site.

Belongs to the DHBP synthase family. In terms of assembly, homodimer. Mg(2+) serves as cofactor. Requires Mn(2+) as cofactor.

The catalysed reaction is D-ribulose 5-phosphate = (2S)-2-hydroxy-3-oxobutyl phosphate + formate + H(+). It participates in cofactor biosynthesis; riboflavin biosynthesis; 2-hydroxy-3-oxobutyl phosphate from D-ribulose 5-phosphate: step 1/1. Catalyzes the conversion of D-ribulose 5-phosphate to formate and 3,4-dihydroxy-2-butanone 4-phosphate. This is 3,4-dihydroxy-2-butanone 4-phosphate synthase from Desulfovibrio desulfuricans (strain ATCC 27774 / DSM 6949 / MB).